The primary structure comprises 957 residues: Glycine dehydrogenase (decarboxylating) (957 aa).

At K708 the chain carries N6-(pyridoxal phosphate)lysine.

The protein belongs to the GcvP family. As to quaternary structure, the glycine cleavage system is composed of four proteins: P, T, L and H. Requires pyridoxal 5'-phosphate as cofactor.

The enzyme catalyses N(6)-[(R)-lipoyl]-L-lysyl-[glycine-cleavage complex H protein] + glycine + H(+) = N(6)-[(R)-S(8)-aminomethyldihydrolipoyl]-L-lysyl-[glycine-cleavage complex H protein] + CO2. In terms of biological role, the glycine cleavage system catalyzes the degradation of glycine. The P protein binds the alpha-amino group of glycine through its pyridoxal phosphate cofactor; CO(2) is released and the remaining methylamine moiety is then transferred to the lipoamide cofactor of the H protein. The chain is Glycine dehydrogenase (decarboxylating) from Escherichia coli (strain ATCC 8739 / DSM 1576 / NBRC 3972 / NCIMB 8545 / WDCM 00012 / Crooks).